A 297-amino-acid polypeptide reads, in one-letter code: Phosphatidylserine decarboxylase proenzyme (297 aa).

Catalysis depends on charge relay system; for autoendoproteolytic cleavage activity residues aspartate 100, histidine 157, and serine 263. Serine 263 functions as the Schiff-base intermediate with substrate; via pyruvic acid; for decarboxylase activity in the catalytic mechanism. The residue at position 263 (serine 263) is a Pyruvic acid (Ser); by autocatalysis.

The protein belongs to the phosphatidylserine decarboxylase family. PSD-B subfamily. Prokaryotic type I sub-subfamily. As to quaternary structure, heterodimer of a large membrane-associated beta subunit and a small pyruvoyl-containing alpha subunit. The cofactor is pyruvate. In terms of processing, is synthesized initially as an inactive proenzyme. Formation of the active enzyme involves a self-maturation process in which the active site pyruvoyl group is generated from an internal serine residue via an autocatalytic post-translational modification. Two non-identical subunits are generated from the proenzyme in this reaction, and the pyruvate is formed at the N-terminus of the alpha chain, which is derived from the carboxyl end of the proenzyme. The autoendoproteolytic cleavage occurs by a canonical serine protease mechanism, in which the side chain hydroxyl group of the serine supplies its oxygen atom to form the C-terminus of the beta chain, while the remainder of the serine residue undergoes an oxidative deamination to produce ammonia and the pyruvoyl prosthetic group on the alpha chain. During this reaction, the Ser that is part of the protease active site of the proenzyme becomes the pyruvoyl prosthetic group, which constitutes an essential element of the active site of the mature decarboxylase.

Its subcellular location is the cell membrane. It catalyses the reaction a 1,2-diacyl-sn-glycero-3-phospho-L-serine + H(+) = a 1,2-diacyl-sn-glycero-3-phosphoethanolamine + CO2. It participates in phospholipid metabolism; phosphatidylethanolamine biosynthesis; phosphatidylethanolamine from CDP-diacylglycerol: step 2/2. Functionally, catalyzes the formation of phosphatidylethanolamine (PtdEtn) from phosphatidylserine (PtdSer). This chain is Phosphatidylserine decarboxylase proenzyme, found in Glaesserella parasuis serovar 5 (strain SH0165) (Haemophilus parasuis).